The following is a 134-amino-acid chain: Transmembrane protein 100 (134 aa).

The next 2 membrane-spanning stretches (helical) occupy residues 56–76 (CIIPFAVVVFIAGIVVTAVAY) and 84–104 (IISIFGLVVLSSGLFLLASSA). Phosphoserine is present on serine 121.

Interacts (via C-terminus) with TRPA1 and TRPV1. Interacts with TASOR. Expressed in neurons of the myenteric and submucosal plexuses in the gastric body, jejunum and proximal colon. Expressed in arterial endothelial cells and neurons of the central nervous system and peripheral nervous system. Expressed in umbilical artery endothelial cells (at protein level).

It localises to the cell membrane. The protein localises to the membrane. Its subcellular location is the perikaryon. It is found in the cytoplasm. The protein resides in the perinuclear region. It localises to the endoplasmic reticulum. Its function is as follows. Plays a role during embryonic arterial endothelium differentiation and vascular morphogenesis through the ACVRL1 receptor-dependent signaling pathway upon stimulation by bone morphogenetic proteins, such as GDF2/BMP9 and BMP10. Involved in the regulation of nociception, acting as a modulator of the interaction between TRPA1 and TRPV1, two molecular sensors and mediators of pain signals in dorsal root ganglia (DRG) neurons. Mechanistically, it weakens their interaction, thereby releasing the inhibition of TRPA1 by TRPV1 and increasing the single-channel open probability of the TRPA1-TRPV1 complex. The chain is Transmembrane protein 100 (TMEM100) from Homo sapiens (Human).